The chain runs to 252 residues: Triosephosphate isomerase (252 aa).

9-11 (NWK) lines the substrate pocket. The active-site Electrophile is H95. The active-site Proton acceptor is the E167. Substrate-binding positions include G173, S211, and 232–233 (GG).

The protein belongs to the triosephosphate isomerase family. As to quaternary structure, homodimer.

It is found in the cytoplasm. The enzyme catalyses D-glyceraldehyde 3-phosphate = dihydroxyacetone phosphate. It participates in carbohydrate biosynthesis; gluconeogenesis. Its pathway is carbohydrate degradation; glycolysis; D-glyceraldehyde 3-phosphate from glycerone phosphate: step 1/1. Its function is as follows. Involved in the gluconeogenesis. Catalyzes stereospecifically the conversion of dihydroxyacetone phosphate (DHAP) to D-glyceraldehyde-3-phosphate (G3P). The sequence is that of Triosephosphate isomerase from Marinobacter nauticus (strain ATCC 700491 / DSM 11845 / VT8) (Marinobacter aquaeolei).